The chain runs to 145 residues: 3-dehydroquinate dehydratase (145 aa).

Catalysis depends on Y23, which acts as the Proton acceptor. Residues N74, H80, and D87 each coordinate substrate. Residue H100 is the Proton donor of the active site. Substrate contacts are provided by residues 101-102 and R111; that span reads LS.

This sequence belongs to the type-II 3-dehydroquinase family. Homododecamer.

The catalysed reaction is 3-dehydroquinate = 3-dehydroshikimate + H2O. It functions in the pathway metabolic intermediate biosynthesis; chorismate biosynthesis; chorismate from D-erythrose 4-phosphate and phosphoenolpyruvate: step 3/7. Its function is as follows. Catalyzes a trans-dehydration via an enolate intermediate. This Bacillus licheniformis (strain ATCC 14580 / DSM 13 / JCM 2505 / CCUG 7422 / NBRC 12200 / NCIMB 9375 / NCTC 10341 / NRRL NRS-1264 / Gibson 46) protein is 3-dehydroquinate dehydratase.